The primary structure comprises 171 residues: S-ribosylhomocysteine lyase (171 aa).

Fe cation-binding residues include histidine 54, histidine 58, and cysteine 128.

It belongs to the LuxS family. In terms of assembly, homodimer. Fe cation is required as a cofactor.

The catalysed reaction is S-(5-deoxy-D-ribos-5-yl)-L-homocysteine = (S)-4,5-dihydroxypentane-2,3-dione + L-homocysteine. In terms of biological role, involved in the synthesis of autoinducer 2 (AI-2) which is secreted by bacteria and is used to communicate both the cell density and the metabolic potential of the environment. The regulation of gene expression in response to changes in cell density is called quorum sensing. Catalyzes the transformation of S-ribosylhomocysteine (RHC) to homocysteine (HC) and 4,5-dihydroxy-2,3-pentadione (DPD). The chain is S-ribosylhomocysteine lyase from Klebsiella pneumoniae (strain 342).